The following is an 89-amino-acid chain: Large ribosomal subunit protein uL23c (89 aa).

The protein belongs to the universal ribosomal protein uL23 family. Part of the 50S ribosomal subunit.

Its subcellular location is the plastid. The protein resides in the chloroplast. In terms of biological role, binds to 23S rRNA. The sequence is that of Large ribosomal subunit protein uL23c (rpl23) from Zygnema circumcarinatum (Green alga).